A 131-amino-acid polypeptide reads, in one-letter code: Aspartate 1-decarboxylase (131 aa).

Serine 25 acts as the Schiff-base intermediate with substrate; via pyruvic acid in catalysis. A Pyruvic acid (Ser) modification is found at serine 25. Substrate is bound at residue threonine 57. The active-site Proton donor is the tyrosine 58. 73 to 75 lines the substrate pocket; that stretch reads GAA.

The protein belongs to the PanD family. In terms of assembly, heterooctamer of four alpha and four beta subunits. Requires pyruvate as cofactor. In terms of processing, is synthesized initially as an inactive proenzyme, which is activated by self-cleavage at a specific serine bond to produce a beta-subunit with a hydroxyl group at its C-terminus and an alpha-subunit with a pyruvoyl group at its N-terminus.

It localises to the cytoplasm. It catalyses the reaction L-aspartate + H(+) = beta-alanine + CO2. It functions in the pathway cofactor biosynthesis; (R)-pantothenate biosynthesis; beta-alanine from L-aspartate: step 1/1. Functionally, catalyzes the pyruvoyl-dependent decarboxylation of aspartate to produce beta-alanine. This Acaryochloris marina (strain MBIC 11017) protein is Aspartate 1-decarboxylase.